We begin with the raw amino-acid sequence, 166 residues long: Small ribosomal subunit protein uS5 (166 aa).

The 64-residue stretch at Leu11 to Val74 folds into the S5 DRBM domain.

Belongs to the universal ribosomal protein uS5 family. As to quaternary structure, part of the 30S ribosomal subunit. Contacts proteins S4 and S8.

Its function is as follows. With S4 and S12 plays an important role in translational accuracy. Functionally, located at the back of the 30S subunit body where it stabilizes the conformation of the head with respect to the body. The protein is Small ribosomal subunit protein uS5 of Syntrophobacter fumaroxidans (strain DSM 10017 / MPOB).